A 339-amino-acid polypeptide reads, in one-letter code: Sphingomyelinase D (339 aa).

The N-terminal stretch at M1–G21 is a signal peptide. The active site involves H60. Mg(2+)-binding residues include E80, D82, and D128. An SMD-tail motif is present at residues A309 to W316. The interval D313–H339 is disordered. Over residues S317 to S328 the composition is skewed to low complexity.

This sequence belongs to the sphingomyelinase D/phospholipase D family. Requires Mg(2+) as cofactor.

The protein resides in the secreted. It catalyses the reaction a sphingomyelin + H2O = an N-acylsphing-4-enine 1-phosphate + choline + H(+). In terms of biological role, catalyzes the hydrolysis of sphingomyelin. Sphingomyelinases D are produced by some spider in their venoms, but also by arthropods such as ticks, or pathogenic bacteria and fungi. They might play a role in pathogenicity through different mechanisms, such as membrane destabilization and host cell penetration, but also pulmonary inflammation and cutaneous lesions. The sequence is that of Sphingomyelinase D from Arthroderma benhamiae (strain ATCC MYA-4681 / CBS 112371) (Trichophyton mentagrophytes).